Reading from the N-terminus, the 455-residue chain is uncharacterized protein (455 aa).

11 helical membrane passes run 26 to 46 (FGPG…QLLI), 53 to 73 (GAWG…ISIG), 77 to 97 (LGVM…RSTA), 111 to 131 (WVVA…LAVI), 146 to 166 (ALRA…TGVW), 191 to 211 (AAGV…SLVV), 232 to 252 (LTVL…AIAV), 256 to 276 (AHIG…IPAL), 278 to 298 (ILAA…LIVG), 323 to 343 (LLVA…GGGG), and 357 to 377 (ALVL…VVIA). The segment at 384 to 455 (PKRLRPAPPV…LSDEPPPRAD (72 aa)) is disordered.

It is found in the cell membrane. This is an uncharacterized protein from Mycobacterium tuberculosis (strain CDC 1551 / Oshkosh).